The sequence spans 489 residues: MNELRKLSITQMHDGLKKKSFSAVELVEAHISAVENEKLNAFITKTPEIAMKAAKAADEHFSRQKDDLISPLMGVPVGIKDLFCTKGIKTTACSKMLENFVPTYESTVSDLLLKSGAAMLGKLNMDEFAMGSANTNSYFGPVENVWIRKSDGEKVVPGGSSGGSAASVAGFLCAGALGSDTGGSVRQPAAYCGVVGIKPTYGRCSRFGMIAFASSLDQAGVITRSVSDSALMLEAICGYDTKDSISSEKPVPKLSSFINGDVKGKCIGIPKEYRMDGISEEIVHNWERVASYLKENGAEVVDITLPHTKYAIPVYYLICSAETSSNLARYDGVRYGLRVDADTLEEMYSLTRAEGFGKEVKRRILIGAYALSSGHYNEYYEKAQCIRALIRNDFIKAFEKIDYILVPSAPTEAFGLNEKPDPLIMCINDVFTVPASLAGLPAISVPVGLSNEGLPLALQVIGNYYDEAGILNVASVIEQNCGRIIRPLA.

Catalysis depends on charge relay system residues K80 and S160. S184 acts as the Acyl-ester intermediate in catalysis.

This sequence belongs to the amidase family. GatA subfamily. Heterotrimer of A, B and C subunits.

The enzyme catalyses L-glutamyl-tRNA(Gln) + L-glutamine + ATP + H2O = L-glutaminyl-tRNA(Gln) + L-glutamate + ADP + phosphate + H(+). In terms of biological role, allows the formation of correctly charged Gln-tRNA(Gln) through the transamidation of misacylated Glu-tRNA(Gln) in organisms which lack glutaminyl-tRNA synthetase. The reaction takes place in the presence of glutamine and ATP through an activated gamma-phospho-Glu-tRNA(Gln). This is Glutamyl-tRNA(Gln) amidotransferase subunit A from Wolbachia sp. subsp. Drosophila simulans (strain wRi).